Reading from the N-terminus, the 453-residue chain is Methylenetetrahydrofolate--tRNA-(uracil-5-)-methyltransferase TrmFO (453 aa).

Residue 10-15 (GGGLAG) coordinates FAD. The interval 433–453 (ELAPWIDSAPPTAVPAAPAAG) is disordered. Residues 441 to 453 (APPTAVPAAPAAG) show a composition bias toward low complexity.

The protein belongs to the MnmG family. TrmFO subfamily. The cofactor is FAD.

The protein localises to the cytoplasm. It catalyses the reaction uridine(54) in tRNA + (6R)-5,10-methylene-5,6,7,8-tetrahydrofolate + NADH + H(+) = 5-methyluridine(54) in tRNA + (6S)-5,6,7,8-tetrahydrofolate + NAD(+). The enzyme catalyses uridine(54) in tRNA + (6R)-5,10-methylene-5,6,7,8-tetrahydrofolate + NADPH + H(+) = 5-methyluridine(54) in tRNA + (6S)-5,6,7,8-tetrahydrofolate + NADP(+). Functionally, catalyzes the folate-dependent formation of 5-methyl-uridine at position 54 (M-5-U54) in all tRNAs. This is Methylenetetrahydrofolate--tRNA-(uracil-5-)-methyltransferase TrmFO from Anaeromyxobacter dehalogenans (strain 2CP-1 / ATCC BAA-258).